Consider the following 505-residue polypeptide: L-carnitine/gamma-butyrobetaine antiporter (505 aa).

Helical transmembrane passes span 10–30, 50–70, 92–112, 143–163, 195–215, 231–251, 263–283, 316–336, 347–367, 403–423, 446–466, and 475–495; these read IEPKVFFPPLIIVGILCWLTV, IWGWAFEWYMVVMLIGWFWLV, IFMMFASCTSAAVLFWGSIEI, GPLPWATYSFLSVAFAYFFFV, FYLVALIFAMGTSLGLATPLV, LDAIIITCWIILNAICVACGL, SYLSFLMLGWVFIVSGASFIM, WTVFYWAWWVIYAIQMSIFLA, LCFGMVLGLTASTWILWTVLG, LSTATMWGFFILCFIATVTLI, LLVRIGWSVLVGIIGIVLLAL, and AIIAGGCPLFFVNIMVTLSFI.

The protein belongs to the BCCT transporter (TC 2.A.15) family. CaiT subfamily. In terms of assembly, homotrimer.

It localises to the cell inner membrane. The enzyme catalyses 4-(trimethylamino)butanoate(in) + (R)-carnitine(out) = 4-(trimethylamino)butanoate(out) + (R)-carnitine(in). It functions in the pathway amine and polyamine metabolism; carnitine metabolism. In terms of biological role, catalyzes the exchange of L-carnitine for gamma-butyrobetaine. The chain is L-carnitine/gamma-butyrobetaine antiporter from Salmonella arizonae (strain ATCC BAA-731 / CDC346-86 / RSK2980).